The sequence spans 265 residues: Ubiquinone biosynthesis protein COQ4 homolog, mitochondrial (265 aa).

A mitochondrion-targeting transit peptide spans 1–30 (MMQRSWQSWRRGLTLGLASRRSYVASVEAP). Residues H170, D171, H174, and E186 each coordinate Zn(2+).

The protein belongs to the COQ4 family. As to quaternary structure, component of a multi-subunit COQ enzyme complex. Requires Zn(2+) as cofactor.

The protein resides in the mitochondrion inner membrane. The catalysed reaction is a 4-hydroxy-3-methoxy-5-(all-trans-polyprenyl)benzoate + H(+) = a 2-methoxy-6-(all-trans-polyprenyl)phenol + CO2. Its pathway is cofactor biosynthesis; ubiquinone biosynthesis. In terms of biological role, lyase that catalyzes the C1-decarboxylation of 4-hydroxy-3-methoxy-5-(all-trans-polyprenyl)benzoic acid into 2-methoxy-6-(all-trans-polyprenyl)phenol during ubiquinone biosynthesis. This Drosophila virilis (Fruit fly) protein is Ubiquinone biosynthesis protein COQ4 homolog, mitochondrial.